The chain runs to 146 residues: D-aminoacyl-tRNA deacylase (146 aa).

The short motif at Gly137–Pro138 is the Gly-cisPro motif, important for rejection of L-amino acids element.

This sequence belongs to the DTD family. Homodimer.

The protein localises to the cytoplasm. It carries out the reaction glycyl-tRNA(Ala) + H2O = tRNA(Ala) + glycine + H(+). It catalyses the reaction a D-aminoacyl-tRNA + H2O = a tRNA + a D-alpha-amino acid + H(+). An aminoacyl-tRNA editing enzyme that deacylates mischarged D-aminoacyl-tRNAs. Also deacylates mischarged glycyl-tRNA(Ala), protecting cells against glycine mischarging by AlaRS. Acts via tRNA-based rather than protein-based catalysis; rejects L-amino acids rather than detecting D-amino acids in the active site. By recycling D-aminoacyl-tRNA to D-amino acids and free tRNA molecules, this enzyme counteracts the toxicity associated with the formation of D-aminoacyl-tRNA entities in vivo and helps enforce protein L-homochirality. This Bacillus cereus (strain ATCC 14579 / DSM 31 / CCUG 7414 / JCM 2152 / NBRC 15305 / NCIMB 9373 / NCTC 2599 / NRRL B-3711) protein is D-aminoacyl-tRNA deacylase.